The chain runs to 156 residues: Small ribosomal subunit protein uS7 (156 aa).

Belongs to the universal ribosomal protein uS7 family. As to quaternary structure, part of the 30S ribosomal subunit. Contacts proteins S9 and S11.

Its function is as follows. One of the primary rRNA binding proteins, it binds directly to 16S rRNA where it nucleates assembly of the head domain of the 30S subunit. Is located at the subunit interface close to the decoding center, probably blocks exit of the E-site tRNA. In Frankia casuarinae (strain DSM 45818 / CECT 9043 / HFP020203 / CcI3), this protein is Small ribosomal subunit protein uS7.